The following is a 246-amino-acid chain: Granzyme H (246 aa).

Residues 1–18 form the signal peptide; the sequence is MQPFLLLLAFLLTPGAGT. Positions 19–20 are cleaved as a propeptide — activation peptide; the sequence is EE. The Peptidase S1 domain maps to 21–244; the sequence is IIGGHEAKPH…FLPWIKRTMK (224 aa). Positions 46–48 are mediates the preference for acidic residues at the P3' and P4' sites; it reads RKR. A disulfide bridge links C49 with C65. Catalysis depends on H64, which acts as the Charge relay system. 2 N-linked (GlcNAc...) asparagine glycosylation sites follow: N71 and N104. Catalysis depends on D108, which acts as the Charge relay system. 2 disulfides stabilise this stretch: C142/C208 and C172/C187. A glycan (N-linked (GlcNAc...) asparagine) is linked at N179. The active-site Charge relay system is S202.

The protein belongs to the peptidase S1 family. Granzyme subfamily. In terms of tissue distribution, constitutively expressed in NK cells.

The protein resides in the cytolytic granule. Its activity is regulated as follows. Inhibited by SERPINB1. Cytotoxic chymotrypsin-like serine protease with preference for bulky and aromatic residues at the P1 position and acidic residues at the P3' and P4' sites. Probably necessary for target cell lysis in cell-mediated immune responses. Participates in the antiviral response via direct cleavage of several proteins essential for viral replication. In Homo sapiens (Human), this protein is Granzyme H (GZMH).